The following is a 71-amino-acid chain: MKSMDKLTTGVAYGTSAGSAGYWFLQLLDKVTPSQWAAIGVLGSLVFGLLTYLTNLYFKIKEDKRKAARGE.

This sequence belongs to the lambda phage S protein family.

In Escherichia coli (strain K12), this protein is Prophage lysis protein S homolog EssD (essD).